Consider the following 218-residue polypeptide: MSAVEWSILPGLSPYRETLEAMENRVAAIRAGEAAEAIWLLEHPPLYTAGTSARPEDLVEPERFPVHVAGRGGQYTYHGPGQRVAYVMLDLDRRGRDVRRFVTALEDWVIATLAEFNVRGERREGRVGVWVVRPDRPAGLDGSPREDKIAAIGVKLRRWVSFHGLSINLEPDLTHFEGIVPCGIREHGVTSLVDLGLPVTMQDLDAALLRTFPQHFPD.

Residues 32-218 (GEAAEAIWLL…LRTFPQHFPD (187 aa)) enclose the BPL/LPL catalytic domain. Residues 71–78 (RGGQYTYH), 151–153 (AIG), and 164–166 (GLS) contribute to the substrate site. Cys182 (acyl-thioester intermediate) is an active-site residue.

Belongs to the LipB family.

It is found in the cytoplasm. The enzyme catalyses octanoyl-[ACP] + L-lysyl-[protein] = N(6)-octanoyl-L-lysyl-[protein] + holo-[ACP] + H(+). Its pathway is protein modification; protein lipoylation via endogenous pathway; protein N(6)-(lipoyl)lysine from octanoyl-[acyl-carrier-protein]: step 1/2. Catalyzes the transfer of endogenously produced octanoic acid from octanoyl-acyl-carrier-protein onto the lipoyl domains of lipoate-dependent enzymes. Lipoyl-ACP can also act as a substrate although octanoyl-ACP is likely to be the physiological substrate. In Cereibacter sphaeroides (strain ATCC 17029 / ATH 2.4.9) (Rhodobacter sphaeroides), this protein is Octanoyltransferase.